Reading from the N-terminus, the 337-residue chain is Tryptophan--tRNA ligase 2 (337 aa).

Residues 13 to 15 (QPT) and 22 to 23 (GN) each bind ATP. Positions 14-23 (PTAGSFHLGN) match the 'HIGH' region motif. Residue Asp-139 participates in L-tryptophan binding. Residues 151–153 (GED), Ile-190, and 199–203 (KMSKS) contribute to the ATP site. The short motif at 199–203 (KMSKS) is the 'KMSKS' region element.

This sequence belongs to the class-I aminoacyl-tRNA synthetase family. In terms of assembly, homodimer.

It localises to the cytoplasm. It carries out the reaction tRNA(Trp) + L-tryptophan + ATP = L-tryptophyl-tRNA(Trp) + AMP + diphosphate + H(+). Functionally, catalyzes the attachment of tryptophan to tRNA(Trp). The polypeptide is Tryptophan--tRNA ligase 2 (Streptomyces avermitilis (strain ATCC 31267 / DSM 46492 / JCM 5070 / NBRC 14893 / NCIMB 12804 / NRRL 8165 / MA-4680)).